Reading from the N-terminus, the 623-residue chain is uncharacterized protein (623 aa).

Over residues 157 to 166 (LNESPLRDQQ) the composition is skewed to basic and acidic residues. Positions 157-237 (LNESPLRDQQ…QGLPDHNNSI (81 aa)) are disordered. Residues 167–177 (ESSTPSKNSTL) are compositionally biased toward polar residues. Residues 193–210 (AFRPLPSPSRRSSQSAPA) show a composition bias toward low complexity.

This is an uncharacterized protein from Macaca fascicularis (Crab-eating macaque).